The primary structure comprises 415 residues: MKLLHSIKAHDDKVWSLSSHPTLPLLATASTDKCSNIYRLSCSNASSSSSSSSPPSPPSPPSSSSPRRNFPQIAHLEDTHRRSVRSVSFKPPMGGIDHQDSNILDLPALASGSFDSTISIWGIDEPDDDNTYEIEEIIANQKEFLASPGNEWNLMAVIEGHENEIKAVDWNFSGRYLASCSRDKTVWIWETDPETLEEFECVAVLTDHTQDVKHVTWHPTRNLLASSSYDDTIRVYKQEFDDDEWSCVGMIDGHEGTVWCSKFESPKSPKAKDGTTRLVSVSDDLSARVWASKDNTGFNGGSEQLQSQSQTHLPSSIRHNAEEMVWEQESTLPQIHTHAIYSVAWSSSSGKIATAGSDGRIVVYKETNAGWEVENIQESAHGVYEINCVIWAKLDLDQEVLISGGDDGNVNIWEV.

The stretch at A9–S48 is one WD 1 repeat. The disordered stretch occupies residues A45 to F70. The span at P54–S63 shows a compositional bias: pro residues. WD repeat units lie at residues T79–T131, G160–E200, D207–S246, G253–G300, I335–E374, and A380–V415.

Belongs to the WD repeat CIA1 family. As to quaternary structure, interacts with NAR1.

It is found in the cytoplasm. It localises to the nucleus. In terms of biological role, essential component of the cytosolic iron-sulfur (Fe/S) protein assembly machinery. Required for the maturation of extramitochondrial Fe/S proteins. This is Probable cytosolic iron-sulfur protein assembly protein 1 from Lodderomyces elongisporus (strain ATCC 11503 / CBS 2605 / JCM 1781 / NBRC 1676 / NRRL YB-4239) (Yeast).